A 333-amino-acid chain; its full sequence is Ketol-acid reductoisomerase (NADP(+)) (333 aa).

Positions 1–179 (MFYDDDADLS…GGTRAGVIKT (179 aa)) constitute a KARI N-terminal Rossmann domain. NADP(+)-binding positions include 22–25 (YGSQ), K45, S48, S50, and 80–83 (DTAQ). H105 is an active-site residue. G131 is an NADP(+) binding site. The KARI C-terminal knotted domain occupies 180-325 (TFKDETETDL…KKLRDLMSWV (146 aa)). Mg(2+) contacts are provided by D188, E192, E224, and E228. S249 contacts substrate.

It belongs to the ketol-acid reductoisomerase family. Mg(2+) serves as cofactor.

It catalyses the reaction (2R)-2,3-dihydroxy-3-methylbutanoate + NADP(+) = (2S)-2-acetolactate + NADPH + H(+). It carries out the reaction (2R,3R)-2,3-dihydroxy-3-methylpentanoate + NADP(+) = (S)-2-ethyl-2-hydroxy-3-oxobutanoate + NADPH + H(+). Its pathway is amino-acid biosynthesis; L-isoleucine biosynthesis; L-isoleucine from 2-oxobutanoate: step 2/4. It participates in amino-acid biosynthesis; L-valine biosynthesis; L-valine from pyruvate: step 2/4. Involved in the biosynthesis of branched-chain amino acids (BCAA). Catalyzes an alkyl-migration followed by a ketol-acid reduction of (S)-2-acetolactate (S2AL) to yield (R)-2,3-dihydroxy-isovalerate. In the isomerase reaction, S2AL is rearranged via a Mg-dependent methyl migration to produce 3-hydroxy-3-methyl-2-ketobutyrate (HMKB). In the reductase reaction, this 2-ketoacid undergoes a metal-dependent reduction by NADPH to yield (R)-2,3-dihydroxy-isovalerate. This chain is Ketol-acid reductoisomerase (NADP(+)), found in Mycobacterium bovis (strain ATCC BAA-935 / AF2122/97).